The primary structure comprises 227 residues: Cytochrome c oxidase subunit 2 (227 aa).

Residues 1-14 (MAHPVQLGLQDATS) are Mitochondrial intermembrane-facing. A helical transmembrane segment spans residues 15–45 (PVMEELITFHDQALMAMFLISFLILYALSST). The Mitochondrial matrix segment spans residues 46-59 (LTTKLTNTNITDAQ). A helical transmembrane segment spans residues 60 to 87 (EMETIWTILPAVILILIALPSLRILYMT). The Mitochondrial intermembrane portion of the chain corresponds to 88–227 (DEINNPSFTI…IFEMGPVFTL (140 aa)). Cu cation is bound by residues H161, C196, E198, C200, H204, and M207. A Mg(2+)-binding site is contributed by E198.

This sequence belongs to the cytochrome c oxidase subunit 2 family. In terms of assembly, component of the cytochrome c oxidase (complex IV, CIV), a multisubunit enzyme composed of 14 subunits. The complex is composed of a catalytic core of 3 subunits MT-CO1, MT-CO2 and MT-CO3, encoded in the mitochondrial DNA, and 11 supernumerary subunits COX4I, COX5A, COX5B, COX6A, COX6B, COX6C, COX7A, COX7B, COX7C, COX8 and NDUFA4, which are encoded in the nuclear genome. The complex exists as a monomer or a dimer and forms supercomplexes (SCs) in the inner mitochondrial membrane with NADH-ubiquinone oxidoreductase (complex I, CI) and ubiquinol-cytochrome c oxidoreductase (cytochrome b-c1 complex, complex III, CIII), resulting in different assemblies (supercomplex SCI(1)III(2)IV(1) and megacomplex MCI(2)III(2)IV(2)). Found in a complex with TMEM177, COA6, COX18, COX20, SCO1 and SCO2. Interacts with TMEM177 in a COX20-dependent manner. Interacts with COX20. Interacts with COX16. Cu cation is required as a cofactor.

Its subcellular location is the mitochondrion inner membrane. The catalysed reaction is 4 Fe(II)-[cytochrome c] + O2 + 8 H(+)(in) = 4 Fe(III)-[cytochrome c] + 2 H2O + 4 H(+)(out). Its function is as follows. Component of the cytochrome c oxidase, the last enzyme in the mitochondrial electron transport chain which drives oxidative phosphorylation. The respiratory chain contains 3 multisubunit complexes succinate dehydrogenase (complex II, CII), ubiquinol-cytochrome c oxidoreductase (cytochrome b-c1 complex, complex III, CIII) and cytochrome c oxidase (complex IV, CIV), that cooperate to transfer electrons derived from NADH and succinate to molecular oxygen, creating an electrochemical gradient over the inner membrane that drives transmembrane transport and the ATP synthase. Cytochrome c oxidase is the component of the respiratory chain that catalyzes the reduction of oxygen to water. Electrons originating from reduced cytochrome c in the intermembrane space (IMS) are transferred via the dinuclear copper A center (CU(A)) of subunit 2 and heme A of subunit 1 to the active site in subunit 1, a binuclear center (BNC) formed by heme A3 and copper B (CU(B)). The BNC reduces molecular oxygen to 2 water molecules using 4 electrons from cytochrome c in the IMS and 4 protons from the mitochondrial matrix. This is Cytochrome c oxidase subunit 2 (MT-CO2) from Papio anubis (Olive baboon).